Reading from the N-terminus, the 116-residue chain is UPF0102 protein Neut_1662 (116 aa).

Belongs to the UPF0102 family.

In Nitrosomonas eutropha (strain DSM 101675 / C91 / Nm57), this protein is UPF0102 protein Neut_1662.